The chain runs to 406 residues: Multifunctional CCA protein (406 aa).

ATP contacts are provided by G8 and R11. G8 and R11 together coordinate CTP. 2 residues coordinate Mg(2+): D21 and D23. ATP is bound by residues R91, R137, and R140. CTP-binding residues include R91, R137, and R140. Residues 228 to 329 enclose the HD domain; it reads TGIHTLMVAE…IKILNKFDVW (102 aa).

The protein belongs to the tRNA nucleotidyltransferase/poly(A) polymerase family. Bacterial CCA-adding enzyme type 1 subfamily. In terms of assembly, monomer. Can also form homodimers and oligomers. Mg(2+) serves as cofactor. The cofactor is Ni(2+).

It carries out the reaction a tRNA precursor + 2 CTP + ATP = a tRNA with a 3' CCA end + 3 diphosphate. The catalysed reaction is a tRNA with a 3' CCA end + 2 CTP + ATP = a tRNA with a 3' CCACCA end + 3 diphosphate. Functionally, catalyzes the addition and repair of the essential 3'-terminal CCA sequence in tRNAs without using a nucleic acid template. Adds these three nucleotides in the order of C, C, and A to the tRNA nucleotide-73, using CTP and ATP as substrates and producing inorganic pyrophosphate. tRNA 3'-terminal CCA addition is required both for tRNA processing and repair. Also involved in tRNA surveillance by mediating tandem CCA addition to generate a CCACCA at the 3' terminus of unstable tRNAs. While stable tRNAs receive only 3'-terminal CCA, unstable tRNAs are marked with CCACCA and rapidly degraded. The protein is Multifunctional CCA protein of Vibrio parahaemolyticus serotype O3:K6 (strain RIMD 2210633).